A 429-amino-acid chain; its full sequence is GTPase Obg (429 aa).

Positions 1 to 158 constitute an Obg domain; that stretch reads MFVDQVKIYV…RNVQLELKVL (158 aa). Residues 124–145 form a disordered region; the sequence is RGNKRFATPANPAPELSENGEP. Residues 159 to 329 enclose the OBG-type G domain; sequence ADVGLVGFPS…LLLAIADKLE (171 aa). Residues 165-172, 190-194, 212-215, 282-285, and 310-312 contribute to the GTP site; these read GFPSVGKS, FTTIV, DLPG, NKMD, and SAV. Mg(2+)-binding residues include serine 172 and threonine 192. Residues 351-429 form the OCT domain; sequence KYVADEPDFE…LLDYEFEFMD (79 aa).

Belongs to the TRAFAC class OBG-HflX-like GTPase superfamily. OBG GTPase family. As to quaternary structure, monomer. Mg(2+) is required as a cofactor.

The protein localises to the cytoplasm. Its function is as follows. An essential GTPase which binds GTP, GDP and possibly (p)ppGpp with moderate affinity, with high nucleotide exchange rates and a fairly low GTP hydrolysis rate. Plays a role in control of the cell cycle, stress response, ribosome biogenesis and in those bacteria that undergo differentiation, in morphogenesis control. The chain is GTPase Obg from Listeria monocytogenes serotype 4a (strain HCC23).